The following is a 157-amino-acid chain: Dihydrofolate reductase type 6 (157 aa).

The DHFR domain occupies 2–156; the sequence is KISLMAAVSE…IDYTYQIWAK (155 aa).

Belongs to the dihydrofolate reductase family. Homodimer.

It catalyses the reaction (6S)-5,6,7,8-tetrahydrofolate + NADP(+) = 7,8-dihydrofolate + NADPH + H(+). Its pathway is cofactor biosynthesis; tetrahydrofolate biosynthesis; 5,6,7,8-tetrahydrofolate from 7,8-dihydrofolate: step 1/1. In terms of biological role, key enzyme in folate metabolism. Catalyzes an essential reaction for de novo glycine and purine synthesis, and for DNA precursor synthesis. The chain is Dihydrofolate reductase type 6 (dhfrVI) from Proteus mirabilis.